A 747-amino-acid chain; its full sequence is Mediator of RNA polymerase II transcription subunit 25 (747 aa).

Positions 1–226 (MVPGSEGPAR…PRHMVLVRGL (226 aa)) are interaction with the Mediator complex. Disordered regions lie at residues 233–274 (GSAP…QYQV) and 299–390 (LGPR…PALG). 2 stretches are compositionally biased toward pro residues: residues 263–272 (QPLPPVPPQY) and 326–342 (PQLP…PPAS). The interval 389-543 (LGGQQSVSNK…VNGIRQVITN (155 aa)) is interaction with VP16. The tract at residues 395–545 (VSNKLLAWSG…GIRQVITNHK (151 aa)) is interaction with CREBBP. Residues 548–747 (QQQKLEQQQR…MEDDILMDLI (200 aa)) form a disordered region. Interaction with RARA stretches follow at residues 564–653 (APPG…LLNP) and 640–707 (PGAN…WPAQ). Residues 598-611 (ASGATGQPQPQGTA) are compositionally biased toward low complexity. Pro residues predominate over residues 612 to 634 (QPPPGAPQGPPGAASGPPPPGPI). The LXXLL motif signature appears at 646 to 650 (LRSLL). 3 stretches are compositionally biased toward pro residues: residues 652-664 (NPPP…PPPQ), 673-683 (PGAPALLPPPH), and 691-713 (LGPP…PRAP). Arg-725 bears the Asymmetric dimethylarginine mark. Positions 738–747 (MEDDILMDLI) are enriched in acidic residues.

The protein belongs to the Mediator complex subunit 25 family. In terms of assembly, component of the Mediator complex, which is composed of MED1, MED4, MED6, MED7, MED8, MED9, MED10, MED11, MED12, MED13, MED13L, MED14, MED15, MED16, MED17, MED18, MED19, MED20, MED21, MED22, MED23, MED24, MED25, MED26, MED27, MED29, MED30, MED31, CCNC, CDK8 and CDC2L6/CDK11. The MED12, MED13, CCNC and CDK8 subunits form a distinct module termed the CDK8 module. Mediator containing the CDK8 module is less active than Mediator lacking this module in supporting transcriptional activation. Individual preparations of the Mediator complex lacking one or more distinct subunits have been variously termed ARC, CRSP, DRIP, PC2, SMCC and TRAP. Interacts with CREBBP. Interacts with ESR1, GR, RARA, RXRA and THRB in a ligand-dependent fashion. Binds the Herpes simplex virus activator VP16. In terms of tissue distribution, ubiquitously expressed. Highest levels in brain, heart, kidney, peripheral leukocytes, placenta, skeletal muscle and spleen.

It localises to the nucleus. In terms of biological role, component of the Mediator complex, a coactivator involved in the regulated transcription of nearly all RNA polymerase II-dependent genes. Mediator functions as a bridge to convey information from gene-specific regulatory proteins to the basal RNA polymerase II transcription machinery. Mediator is recruited to promoters by direct interactions with regulatory proteins and serves as a scaffold for the assembly of a functional preinitiation complex with RNA polymerase II and the general transcription factors. Required for RARA/RXRA-mediated transcription. The sequence is that of Mediator of RNA polymerase II transcription subunit 25 (MED25) from Homo sapiens (Human).